Reading from the N-terminus, the 182-residue chain is Isopentenyl-diphosphate Delta-isomerase (182 aa).

Mn(2+)-binding residues include His25 and His32. In terms of domain architecture, Nudix hydrolase spans 30–164 (LLHLAFSSWL…PWAFSPWMVM (135 aa)). The active site involves Cys67. Position 69 (His69) interacts with Mn(2+). Glu87 serves as a coordination point for Mg(2+). Positions 114 and 116 each coordinate Mn(2+). Glu116 is a catalytic residue.

The protein belongs to the IPP isomerase type 1 family. Homodimer. Mg(2+) serves as cofactor. It depends on Mn(2+) as a cofactor.

The protein localises to the cytoplasm. The enzyme catalyses isopentenyl diphosphate = dimethylallyl diphosphate. The protein operates within isoprenoid biosynthesis; dimethylallyl diphosphate biosynthesis; dimethylallyl diphosphate from isopentenyl diphosphate: step 1/1. Functionally, catalyzes the 1,3-allylic rearrangement of the homoallylic substrate isopentenyl (IPP) to its highly electrophilic allylic isomer, dimethylallyl diphosphate (DMAPP). The sequence is that of Isopentenyl-diphosphate Delta-isomerase from Escherichia coli O9:H4 (strain HS).